The following is a 177-amino-acid chain: Trafficking regulator of GLUT4 1 (177 aa).

At Met1–Leu105 the chain is on the cytoplasmic side. Residues Ser48, Ser87, and Ser88 each carry the phosphoserine modification. Positions Glu71 to Thr92 are disordered. Positions Ala72–Ser88 are enriched in low complexity. An intramembrane region (helical) is located at residues Ile106–Ile126. The Cytoplasmic portion of the chain corresponds to Ser127 to Ser153. The helical transmembrane segment at Ile154–Val174 threads the bilayer. Residues Gln175–Lys177 lie on the Extracellular side of the membrane.

It belongs to the CD225/Dispanin family. As to quaternary structure, interacts with SLC2A4; the interaction is required for proper SLC2A4 reacycling after insulin stimulation. Expressed at high levels in heart, mammary gland, adrenal gland, stomach, smooth muscle and skeletal muscle, and at lower levels in brain and lung. Strongly down-regulated in lung cancer tissues, due to hypermethylation of the corresponding locus. Expressed in adipose tissue.

It localises to the cell membrane. The protein resides in the endomembrane system. Its subcellular location is the cytoplasm. It is found in the perinuclear region. Its function is as follows. Regulates insulin-mediated adipose tissue glucose uptake and transport by modulation of SLC2A4 recycling. Not required for SLC2A4 membrane fusion upon an initial stimulus, but rather is necessary for proper protein recycling during prolonged insulin stimulation. The sequence is that of Trafficking regulator of GLUT4 1 from Homo sapiens (Human).